The primary structure comprises 91 residues: MSRSLKKGPFVDKYLQKKVEALNTANKKEVVKTWSRRSVIFPEFIGHTFAVHNGKEHIPVYVTEDMIGHKLGEFSPTRKFGGHGDDKKKKK.

Residues 72–91 form a disordered region; the sequence is GEFSPTRKFGGHGDDKKKKK. Basic and acidic residues predominate over residues 82–91; sequence GHGDDKKKKK.

This sequence belongs to the universal ribosomal protein uS19 family.

Its function is as follows. Protein S19 forms a complex with S13 that binds strongly to the 16S ribosomal RNA. The sequence is that of Small ribosomal subunit protein uS19 from Spiroplasma kunkelii.